An 88-amino-acid chain; its full sequence is MNITDVRVRKIAKEGKMRAVVSITIDDEFVVHDIKVIEGEKGLFIAMPSRKSSDGEYRDIAHPINTQTRDKLQKIVLEAYEKAEYVEE.

The protein belongs to the SpoVG family.

Functionally, could be involved in septation. The sequence is that of Putative septation protein SpoVG from Lachnospira eligens (strain ATCC 27750 / DSM 3376 / VPI C15-48 / C15-B4) (Eubacterium eligens).